A 120-amino-acid chain; its full sequence is NAD(P)H-quinone oxidoreductase subunit 3, chloroplastic (120 aa).

The next 3 membrane-spanning stretches (helical) occupy residues 2 to 22 (FLLY…VIPI), 64 to 84 (MFAL…PWAL), and 88 to 108 (ILGV…VLGL).

This sequence belongs to the complex I subunit 3 family. NDH is composed of at least 16 different subunits, 5 of which are encoded in the nucleus.

The protein resides in the plastid. It is found in the chloroplast thylakoid membrane. It carries out the reaction a plastoquinone + NADH + (n+1) H(+)(in) = a plastoquinol + NAD(+) + n H(+)(out). It catalyses the reaction a plastoquinone + NADPH + (n+1) H(+)(in) = a plastoquinol + NADP(+) + n H(+)(out). NDH shuttles electrons from NAD(P)H:plastoquinone, via FMN and iron-sulfur (Fe-S) centers, to quinones in the photosynthetic chain and possibly in a chloroplast respiratory chain. The immediate electron acceptor for the enzyme in this species is believed to be plastoquinone. Couples the redox reaction to proton translocation, and thus conserves the redox energy in a proton gradient. This chain is NAD(P)H-quinone oxidoreductase subunit 3, chloroplastic, found in Oenothera argillicola (Appalachian evening primrose).